The sequence spans 587 residues: Glutathione hydrolase proenzyme (587 aa).

The signal sequence occupies residues 1 to 28 (MKRTWNVCLTALLSVLLVAGSVPFHAEA). Residues 29–35 (KKPPKSY) constitute a propeptide that is removed on maturation. Position 113 (arginine 113) interacts with L-glutamate. Catalysis depends on threonine 403, which acts as the Nucleophile. Residues threonine 421, glutamate 423, glutamate 442, aspartate 445, 464 to 465 (SS), and 485 to 486 (GG) each bind L-glutamate.

This sequence belongs to the gamma-glutamyltransferase family. As to quaternary structure, this enzyme consists of two polypeptide chains, which are synthesized in precursor form from a single polypeptide. Cleaved by autocatalysis into a large and small subunit.

It localises to the secreted. The enzyme catalyses an N-terminal (5-L-glutamyl)-[peptide] + an alpha-amino acid = 5-L-glutamyl amino acid + an N-terminal L-alpha-aminoacyl-[peptide]. It carries out the reaction glutathione + H2O = L-cysteinylglycine + L-glutamate. The catalysed reaction is an S-substituted glutathione + H2O = an S-substituted L-cysteinylglycine + L-glutamate. Its pathway is sulfur metabolism; glutathione metabolism. Its activity is regulated as follows. Inhibited by glucose. Cleaves the gamma-glutamyl bond of extracellular glutathione (gamma-Glu-Cys-Gly), glutathione conjugates, and other gamma-glutamyl compounds. The metabolism of glutathione releases free glutamate and the dipeptide cysteinyl-glycine, which is hydrolyzed to cysteine and glycine by dipeptidases. Uses glutamine as a gamma-glutamyl donor and acceptor for gamma-polyglutamic acid synthesis. Dipeptides are better gamma-glutamyl acceptors than free amino acids. In Bacillus subtilis subsp. natto, this protein is Glutathione hydrolase proenzyme (ggt).